Consider the following 740-residue polypeptide: Catalase-peroxidase (740 aa).

The disordered stretch occupies residues 1–32; that stretch reads MPEDRPIEDSPPIGEAQTDAPAGGCPAGFGRI. Residues 113–237 constitute a cross-link (tryptophyl-tyrosyl-methioninium (Trp-Tyr) (with M-263)); the sequence is WHAAGTYRVS…LAAVQMGLIY (125 aa). The active-site Proton acceptor is the H114. A cross-link (tryptophyl-tyrosyl-methioninium (Tyr-Met) (with W-113)) is located at residues 237-263; that stretch reads YVNPEGPNGNPDPQASAIDIRETFGRM. H278 is a binding site for heme b.

It belongs to the peroxidase family. Peroxidase/catalase subfamily. In terms of assembly, homodimer or homotetramer. Heme b is required as a cofactor. Formation of the three residue Trp-Tyr-Met cross-link is important for the catalase, but not the peroxidase activity of the enzyme.

The catalysed reaction is H2O2 + AH2 = A + 2 H2O. It carries out the reaction 2 H2O2 = O2 + 2 H2O. Its function is as follows. Bifunctional enzyme with both catalase and broad-spectrum peroxidase activity. May play a role in the intracellular survival of mycobacteria. In Mycolicibacterium smegmatis (Mycobacterium smegmatis), this protein is Catalase-peroxidase.